The sequence spans 799 residues: Protein translocase subunit SecA (799 aa).

ATP-binding positions include Q85, 103–107 (GEGKT), and D504.

The protein belongs to the SecA family. Monomer and homodimer. Part of the essential Sec protein translocation apparatus which comprises SecA, SecYEG and auxiliary proteins SecDF. Other proteins may also be involved.

It localises to the cell membrane. The protein localises to the cytoplasm. The catalysed reaction is ATP + H2O + cellular proteinSide 1 = ADP + phosphate + cellular proteinSide 2.. Part of the Sec protein translocase complex. Interacts with the SecYEG preprotein conducting channel. Has a central role in coupling the hydrolysis of ATP to the transfer of proteins into and across the cell membrane, serving as an ATP-driven molecular motor driving the stepwise translocation of polypeptide chains across the membrane. The sequence is that of Protein translocase subunit SecA from Lactobacillus acidophilus (strain ATCC 700396 / NCK56 / N2 / NCFM).